The chain runs to 666 residues: Protein SLY1 (666 aa).

A run of 4 repeats spans residues Lys-106–Gln-142, Lys-220–Glu-257, Leu-436–Glu-474, and Lys-478–Asp-514. Residues Lys-106 to Asp-514 form a 4 X approximate repeats region.

It belongs to the STXBP/unc-18/SEC1 family. Interacts with SED5.

It localises to the cytoplasm. It is found in the membrane. Functionally, able to suppress the functional loss of YPT1. SLY1 is essential for cell viability. May interact indirectly, or directly with YPT1. The sequence is that of Protein SLY1 (SLY1) from Saccharomyces cerevisiae (strain ATCC 204508 / S288c) (Baker's yeast).